The chain runs to 4687 residues: Plectin (4687 aa).

Residues 1–1473 (MVAGMLMPLD…SELTTLTSQY (1473 aa)) are globular 1. R21 bears the Phosphoserine mark. Position 26 is a phosphotyrosine (V26). The segment at 111–158 (RRRSPHVQTMQGPLGCPPKRGPLPAEDPAREERQVYRRKEREEGAPET) is disordered. Basic and acidic residues predominate over residues 137 to 154 (DPAREERQVYRRKEREEG). Positions 181–406 (DERDRVQKKT…YVSSLYDAMP (226 aa)) are actin-binding. Calponin-homology (CH) domains lie at 185–288 (RVQK…LHFK) and 301–406 (MTAK…DAMP). A Spectrin 1 repeat occupies 648-722 (LQSTQRRPEL…ERARNDESQL (75 aa)). S723 is modified (phosphoserine). 2 Spectrin repeats span residues 743 to 827 (KLLN…REDH) and 840 to 933 (LQTQ…AIVQ). A Phosphothreonine modification is found at T818. The SH3 domain occupies 944 to 1001 (RGHVPLLAVCDYKQVEVTVHKGDQCQLVGPAQPFHWKVLSSSGSEAAVPSVCFLVPPP). Residue S1050 is modified to Phosphoserine. One copy of the Spectrin 4 repeat lies at 1318–1418 (RERVTQLLER…QKFAKQYINA (101 aa)). The residue at position 1438 (S1438) is a Phosphoserine. 2 coiled-coil regions span residues 1472–1692 (QYIK…ERWL) and 1724–2760 (SFAE…TSQA). Positions 1474 to 2758 (IKFISETLRR…LAHSEEIATS (1285 aa)) are central fibrous rod domain. The interval 1623 to 1647 (EEAEAQKRQAQEEAERLRRQVQDES) is disordered. Residue S1724 is modified to Phosphoserine. The residue at position 1728 (K1728) is an N6-acetyllysine. 5 disordered regions span residues 1741–1764 (VTVT…ERAR), 1796–1846 (SLAQ…GTAQ), 2096–2139 (EDTM…AEEE), 2164–2188 (LRER…KRLQ), and 2218–2307 (RLRS…DAEM). 3 stretches are compositionally biased toward basic and acidic residues: residues 1801–1839 (DAEK…KQRQ), 2096–2111 (EDTM…EAAR), and 2119–2131 (EEQR…ERVQ). Residues 2173–2182 (ARQLQLAQEA) are compositionally biased toward low complexity. Residues 2218–2261 (RLRSEAEAARRAAEEAEEAREQAEREAAQSRKQVEEAERLKQSA) show a composition bias toward basic and acidic residues. Residues 2262–2275 (EEQAQAQAQAQAAA) show a composition bias toward low complexity. Positions 2276–2291 (EKLRKEAEQEAARRAQ) are enriched in basic and acidic residues. S2634 carries the post-translational modification Phosphoserine. K2639 is modified (N6-acetyllysine). The segment at 2671-2710 (QEEQQRQQQQMEQEKQELVASMEEARRRQREAEEGVRRKQ) is disordered. The segment covering 2682-2710 (EQEKQELVASMEEARRRQREAEEGVRRKQ) has biased composition (basic and acidic residues). A globular 2 region spans residues 2759 to 4687 (QAAATKALPN…SLGGPESAVA (1929 aa)). Residue S2777 is modified to Phosphoserine. Y2784 carries the post-translational modification Phosphotyrosine. Plectin repeat units follow at residues 2791-2828 (QKVP…REDV), 2829-2866 (RHYL…PGTA), 2867-2904 (LILL…PELH), 2905-2942 (HKLL…RDHG), 2943-2980 (IRLL…EEMN), and 2984-3018 (ADPS…PETG). A Phosphoserine modification is found at S2805. A Phosphothreonine modification is found at T2889. A Phosphotyrosine modification is found at Y3036. K3056 and K3094 each carry N6-acetyllysine. Plectin repeat units lie at residues 3119 to 3156 (ALVP…ADEV), 3157 to 3194 (RQAL…PEVA), 3195 to 3232 (VALL…PEMH), 3233 to 3270 (EKLL…REQG), 3271 to 3308 (LRLL…KETN), and 3311 to 3346 (LTSP…QLTG). Y3365 carries the post-translational modification Phosphotyrosine. K3423 carries the post-translational modification N6-acetyllysine. 5 Plectin repeats span residues 3488 to 3525 (RTLL…ASTA), 3526 to 3563 (TLLL…PELH), 3564 to 3601 (EKLL…RDHA), 3602 to 3639 (IRLL…EEMN), and 3643 to 3677 (ADPS…PETG). A Phosphoserine modification is found at S3583. Residue T3788 is modified to Phosphothreonine. The residue at position 3793 (Y3793) is a Phosphotyrosine. Plectin repeat units lie at residues 3823-3860 (WRYL…AEVA), 3861-3898 (RLLL…PELH), 3899-3936 (DRLL…AEEA), 3937-3974 (LRLL…KDTH), and 3978-4011 (SEPS…DNSG). The residue at position 4033 (T4033) is a Phosphothreonine. A Phosphoserine modification is found at S4057. Plectin repeat units follow at residues 4066–4103 (QKFL…PGTA), 4104–4141 (FELL…PEFK), 4142–4179 (DKLL…KDHG), 4180–4217 (IRLL…EEMN), 4221–4255 (TDPS…PQTG), and 4268–4308 (RKTS…HQTY). The interval 4253–4303 (QTGLCLLPLKEKKRERKTSSKSSVRKRRVVIVDPETGKEMSVYEAYRKGLI) is binding to intermediate filaments. Phosphoserine occurs at positions 4385, 4387, 4388, 4389, 4392, 4393, 4394, and 4395. Y4396 is subject to Phosphotyrosine. A phosphoserine mark is found at S4399 and S4409. Plectin repeat units follow at residues 4411-4448 (SDPT…NITG), 4449-4486 (QRLL…KIMV), 4487-4524 (DRIN…YEAG), 4525-4562 (QRFL…ARTA), and 4563-4600 (QKLR…EGTG). Residue T4414 is modified to Phosphothreonine. Phosphothreonine; by CDK1 is present on T4542. Phosphoserine occurs at positions 4610 and 4616. A compositionally biased stretch (low complexity) spans 4614-4674 (YYSPYSVSGS…SGYGRRYASG (61 aa)). Positions 4614 to 4687 (YYSPYSVSGS…SLGGPESAVA (74 aa)) are disordered. Y4618 carries the phosphotyrosine modification. A phosphoserine mark is found at S4619, S4621, and S4625. At T4626 the chain carries Phosphothreonine. Residues 4628–4643 (GSRTGSRTGSRAGSRR) are 4 X 4 AA tandem repeats of G-S-R-X. S4629 is subject to Phosphoserine. Omega-N-methylarginine occurs at positions 4630 and 4643. S4645 and S4678 each carry phosphoserine.

Belongs to the plakin or cytolinker family. In terms of assembly, homodimer or homotetramer. Interacts (via actin-binding domain) with SYNE3. Interacts (via calponin-homology (CH) 1 domain) with VIM (via rod region). Interacts (via N-terminus) with DST isoform 2 (via N-terminus). Interacts with FER. Interacts with TOR1A. Interacts with ANK3. Identified in complexes that contain VIM, EZR, AHNAK, BFSP1, BFSP2, ANK2, PLEC, PRX and spectrin. In terms of processing, phosphorylated by CDK1; regulates dissociation from intermediate filaments during mitosis. Isoform 2 is phosphorylated on Ser-21 and Tyr-26. Widely expressed with highest expression in skeletal muscle and lowest in thymus.

The protein localises to the cytoplasm. The protein resides in the cytoskeleton. Its subcellular location is the cell junction. It is found in the hemidesmosome. It localises to the cell projection. The protein localises to the podosome. Interlinks intermediate filaments with microtubules and microfilaments and anchors intermediate filaments to desmosomes or hemidesmosomes. May be involved not only in the cross-linking and stabilization of cytoskeletal intermediate filaments network, but also in the regulation of their dynamics. The sequence is that of Plectin (Plec) from Rattus norvegicus (Rat).